The sequence spans 562 residues: Nucleoprotein (562 aa).

The interval 54–237 (LRKTKRTDGD…ITKDESAINI (184 aa)) is binding site for the cap structure m7GTP. Residues Asp381 and Glu383 each contribute to the Mn(2+) site. Residues Glu391, Cys498, His501, and Cys523 each coordinate Zn(2+). Asp527 serves as a coordination point for Mn(2+).

Belongs to the arenaviridae nucleocapsid protein family. As to quaternary structure, homomultimerizes to form the nucleocapsid. Binds to viral genomic RNA. Interacts with glycoprotein G2. Interacts with protein Z; this interaction probably directs the encapsidated genome to budding sites. Interacts with protein L; this interaction does not interfere with Z-L interaction. Interacts with host IKBKE (via Protein kinase domain); the interaction inhibits IKBKE kinase activity.

The protein resides in the virion. It localises to the host cytoplasm. Its function is as follows. Encapsidates the genome, protecting it from nucleases. The encapsidated genomic RNA is termed the nucleocapsid (NC). Serves as template for viral transcription and replication. The increased presence of protein N in host cell does not seem to trigger the switch from transcription to replication as observed in other negative strain RNA viruses. Through the interaction with host IKBKE, strongly inhibits the phosphorylation and nuclear translocation of host IRF3, a protein involved in interferon activation pathway, leading to the inhibition of interferon-beta and IRF3-dependent promoters activation. Also encodes a functional 3'-5' exoribonuclease that degrades preferentially dsRNA substrates and thereby participates in the suppression of interferon induction. In Homo sapiens (Human), this protein is Nucleoprotein.